Here is a 1001-residue protein sequence, read N- to C-terminus: X-linked retinitis pigmentosa GTPase regulator (1001 aa).

RCC1 repeat units follow at residues 54–105, 106–158, 159–208, 209–261, 262–313, and 314–367; these read NKLY…STDT, GGVY…LTED, GKLF…VTMD, GELY…LTEK, VVYA…MTEL, and GLLY…FATP. Positions 404-428 are disordered; it reads SLSARLRRRERERPPCSASMVGTLP. At S518 the chain carries Phosphoserine. Composition is skewed to basic and acidic residues over residues 631-641 and 659-671; these read KKIRESEENSK and EDNK…RRSS. 4 disordered regions span residues 631–738, 794–869, 902–925, and 962–1001; these read KKIR…WYDR, NLEF…EGSE, PKGH…DPTS, and GDQI…CTIL. Acidic residues-rich tracts occupy residues 679–691 and 717–731; these read SETE…DSYM and EKDE…EVET. Composition is skewed to basic and acidic residues over residues 794 to 818, 847 to 857, and 902 to 911; these read NLEF…EKEA, EERKEGEKEIV, and PKGHMYDRVK. Residues 976–1001 are compositionally biased toward polar residues; that stretch reads QNHMGQNLQDSTTPNMEGKSKSCTIL. C998 carries the cysteine methyl ester modification. Residue C998 is the site of S-geranylgeranyl cysteine attachment. Positions 999–1001 are cleaved as a propeptide — removed in mature form; that stretch reads TIL.

In terms of assembly, interacts with SPATA7. Interacts with PDE6D. Interacts with RPGRIP1 and RPGRIP1L; PDE6D, RPGRIP1 and RPGRIP1L may compete for the same binding sites. Interacts with NPM1. Interacts with PDE6D. Isoform 5 interacts (via N-terminus) with SMC1A and SMC3. Isoform 5 interacts with CEP290. Interacts with WHRN. Interacts with RAB37 and RAB8A (in GDP-bound forms); functions as GEF for RAB37 and RAB8A. Prenylated. As to expression, expressed in the retina (at protein level). Located mainly in the connecting cilia between the outer segment and inner segment and also observed in the outer plexiform layer, inner plexiform layer, and ganglion cell layer of the retinas. Isoform 1: Expressed in the retina (at protein level). Isoform 5: Expressed in the retina (at protein level). Expressed in the brain. Expressed in the testis (at protein level). Expressed in kidney (at protein level).

The protein localises to the golgi apparatus. Its subcellular location is the cytoplasm. It localises to the cytoskeleton. The protein resides in the microtubule organizing center. It is found in the centrosome. The protein localises to the cell projection. Its subcellular location is the cilium. It localises to the cilium basal body. The protein resides in the cilium axoneme. It is found in the flagellum axoneme. In terms of biological role, acts as a guanine-nucleotide releasing factor (GEF) for RAB8A and RAB37 by promoting the conversion of inactive RAB-GDP to the active form RAB-GTP. GEF activity towards RAB8A may facilitate ciliary trafficking by modulating ciliary intracellular localization of RAB8A. GEF activity towards RAB37 maintains autophagic homeostasis and retinal function. Involved in photoreceptor integrity. May control cilia formation by regulating actin stress filaments and cell contractility. May be involved in microtubule organization and regulation of transport in primary cilia. Its function is as follows. Isoform 5 may play a critical role in spermatogenesis and in intraflagellar transport processes. The protein is X-linked retinitis pigmentosa GTPase regulator of Mus musculus (Mouse).